We begin with the raw amino-acid sequence, 220 residues long: Deoxyribose-phosphate aldolase (220 aa).

The active-site Proton donor/acceptor is the Asp89. Lys151 serves as the catalytic Schiff-base intermediate with acetaldehyde. Lys180 (proton donor/acceptor) is an active-site residue.

This sequence belongs to the DeoC/FbaB aldolase family. DeoC type 1 subfamily.

It localises to the cytoplasm. It carries out the reaction 2-deoxy-D-ribose 5-phosphate = D-glyceraldehyde 3-phosphate + acetaldehyde. The protein operates within carbohydrate degradation; 2-deoxy-D-ribose 1-phosphate degradation; D-glyceraldehyde 3-phosphate and acetaldehyde from 2-deoxy-alpha-D-ribose 1-phosphate: step 2/2. Functionally, catalyzes a reversible aldol reaction between acetaldehyde and D-glyceraldehyde 3-phosphate to generate 2-deoxy-D-ribose 5-phosphate. The polypeptide is Deoxyribose-phosphate aldolase (Staphylococcus epidermidis (strain ATCC 12228 / FDA PCI 1200)).